The sequence spans 140 residues: L-fucose mutarotase (140 aa).

H22 acts as the Proton donor in catalysis. Substrate is bound by residues D30, R107, and 129–131; that span reads YGN.

It belongs to the RbsD / FucU family. FucU mutarotase subfamily. In terms of assembly, homodecamer.

The protein localises to the cytoplasm. The enzyme catalyses alpha-L-fucose = beta-L-fucose. The protein operates within carbohydrate metabolism; L-fucose metabolism. Involved in the anomeric conversion of L-fucose. The protein is L-fucose mutarotase of Shigella boydii serotype 18 (strain CDC 3083-94 / BS512).